The following is a 154-amino-acid chain: 6,7-dimethyl-8-ribityllumazine synthase (154 aa).

5-amino-6-(D-ribitylamino)uracil contacts are provided by residues Phe-15, 47–49 (TFD), and 71–73 (AVI). 76 to 77 (ET) provides a ligand contact to (2S)-2-hydroxy-3-oxobutyl phosphate. The Proton donor role is filled by His-79. Leu-104 lines the 5-amino-6-(D-ribitylamino)uracil pocket. Arg-119 provides a ligand contact to (2S)-2-hydroxy-3-oxobutyl phosphate.

The protein belongs to the DMRL synthase family.

The catalysed reaction is (2S)-2-hydroxy-3-oxobutyl phosphate + 5-amino-6-(D-ribitylamino)uracil = 6,7-dimethyl-8-(1-D-ribityl)lumazine + phosphate + 2 H2O + H(+). The protein operates within cofactor biosynthesis; riboflavin biosynthesis; riboflavin from 2-hydroxy-3-oxobutyl phosphate and 5-amino-6-(D-ribitylamino)uracil: step 1/2. Functionally, catalyzes the formation of 6,7-dimethyl-8-ribityllumazine by condensation of 5-amino-6-(D-ribitylamino)uracil with 3,4-dihydroxy-2-butanone 4-phosphate. This is the penultimate step in the biosynthesis of riboflavin. The sequence is that of 6,7-dimethyl-8-ribityllumazine synthase from Saccharolobus islandicus (strain M.16.27) (Sulfolobus islandicus).